We begin with the raw amino-acid sequence, 128 residues long: Large ribosomal subunit protein bL12 (128 aa).

This sequence belongs to the bacterial ribosomal protein bL12 family. Homodimer. Part of the ribosomal stalk of the 50S ribosomal subunit. Forms a multimeric L10(L12)X complex, where L10 forms an elongated spine to which 2 to 4 L12 dimers bind in a sequential fashion. Binds GTP-bound translation factors.

In terms of biological role, forms part of the ribosomal stalk which helps the ribosome interact with GTP-bound translation factors. Is thus essential for accurate translation. This chain is Large ribosomal subunit protein bL12, found in Halorhodospira halophila (strain DSM 244 / SL1) (Ectothiorhodospira halophila (strain DSM 244 / SL1)).